The following is a 294-amino-acid chain: 4-hydroxy-tetrahydrodipicolinate synthase (294 aa).

Residue threonine 45 participates in pyruvate binding. The active-site Proton donor/acceptor is the tyrosine 133. Lysine 161 acts as the Schiff-base intermediate with substrate in catalysis. Isoleucine 203 provides a ligand contact to pyruvate.

Belongs to the DapA family. As to quaternary structure, homotetramer; dimer of dimers.

It is found in the cytoplasm. It carries out the reaction L-aspartate 4-semialdehyde + pyruvate = (2S,4S)-4-hydroxy-2,3,4,5-tetrahydrodipicolinate + H2O + H(+). It participates in amino-acid biosynthesis; L-lysine biosynthesis via DAP pathway; (S)-tetrahydrodipicolinate from L-aspartate: step 3/4. In terms of biological role, catalyzes the condensation of (S)-aspartate-beta-semialdehyde [(S)-ASA] and pyruvate to 4-hydroxy-tetrahydrodipicolinate (HTPA). The chain is 4-hydroxy-tetrahydrodipicolinate synthase from Shewanella sp. (strain MR-7).